A 517-amino-acid polypeptide reads, in one-letter code: Sugar transport protein MST1 (517 aa).

Residues 1-25 lie on the Cytoplasmic side of the membrane; that stretch reads MAGGVIVANDGDGSAVDHGGRLTFS. The chain crosses the membrane as a helical span at residues 26–46; it reads VVITCLVAASGGLIFGYDVGI. Topologically, residues 47 to 83 are extracellular; that stretch reads SGGVSTMEPFLRRFFPGVVRRMAEARPGNEYCVYDSQ. The helical transmembrane segment at 84 to 104 threads the bilayer; that stretch reads ALTAFTSSLYVAGLVASLVAS. Residues 105 to 120 are Cytoplasmic-facing; it reads RVTRAMGRQAVMVMGG. A helical membrane pass occupies residues 121-141; sequence ALFFAGGAVTGFAVNIAMLIV. At 142–143 the chain is on the extracellular side; it reads GR. A helical membrane pass occupies residues 144–164; that stretch reads MLLGFGVGFTNQAAPLFLAEM. Residues 165-170 lie on the Cytoplasmic side of the membrane; the sequence is APTRWR. A helical membrane pass occupies residues 171–191; sequence GSLTAGFQFFLAVGVVIATVT. At 192–203 the chain is on the extracellular side; the sequence is NYFASRVPWGWR. Residues 204 to 224 traverse the membrane as a helical segment; it reads LSLGLAGAPAVVIFLGALFLT. Over 225 to 288 the chain is Cytoplasmic; that stretch reads DTPSSLVMRG…AARREYRPYL (64 aa). Residues 289 to 309 traverse the membrane as a helical segment; it reads VFAVAMPMFFQLTGVIVISFF. Topologically, residues 310–325 are extracellular; the sequence is SPLVFRTVGFGSNAAL. The helical transmembrane segment at 326 to 346 threads the bilayer; it reads MGNVILGAVNLVCLMLSTLVI. Residues 347–352 are Cytoplasmic-facing; the sequence is DRYGRK. The helical transmembrane segment at 353–373 threads the bilayer; sequence VLFMVGGAIMIIAQVGVAWIM. Over 374-389 the chain is Extracellular; sequence GAQVGKNGSEAMARPY. A helical transmembrane segment spans residues 390 to 410; it reads AVAVVAFTCLHTAGFGWSWGP. Over 411–430 the chain is Cytoplasmic; it reads LGWVIPGEIFPVDIRSAGQA. Residues 431 to 451 traverse the membrane as a helical segment; sequence MNVSIGLGLTFVQTQSFLAML. The Extracellular portion of the chain corresponds to 452–456; the sequence is CRFRY. Residues 457–477 form a helical membrane-spanning segment; that stretch reads GTFAYYAAWVAVMTVFIAVFL. Residues 478–517 lie on the Cytoplasmic side of the membrane; the sequence is PETKGVPLESMATVWARHWYWKRFAREQPKTSADEPTGTY.

Belongs to the major facilitator superfamily. Sugar transporter (TC 2.A.1.1) family.

It localises to the membrane. Functionally, mediates active uptake of hexoses by sugar:proton symport. This Oryza sativa subsp. japonica (Rice) protein is Sugar transport protein MST1.